Consider the following 384-residue polypeptide: Toluene efflux pump periplasmic linker protein TtgA (384 aa).

The first 22 residues, 1–22 (MQFKPAVTALVSAVALATLLSG), serve as a signal peptide directing secretion. A lipid anchor (N-palmitoyl cysteine) is attached at C23. Residue C23 is the site of S-diacylglycerol cysteine attachment. Positions 115–155 (LAERYKQLIDEQAVSKQEYDDANAKRLQAEASLKSAQIDLR) form a coiled coil. The tract at residues 362–384 (ATNVKKPAGPDQANAAKADAKAE) is disordered. A compositionally biased stretch (low complexity) spans 368 to 378 (PAGPDQANAAK).

This sequence belongs to the membrane fusion protein (MFP) (TC 8.A.1) family.

The protein resides in the cell inner membrane. In terms of biological role, the periplasmic linker protein component of a constitutive organic solvent efflux system. Involved in export of toluene, styrene, m-xylene, propylbenzene and ethylbenzene. Also exports AMP and the antibiotics carbenicillin, nalidixic acid, chloramphenicol and tetracycline. This is Toluene efflux pump periplasmic linker protein TtgA (ttgA) from Pseudomonas putida (strain DOT-T1E).